Here is a 695-residue protein sequence, read N- to C-terminus: Glycine--tRNA ligase beta subunit (695 aa).

This sequence belongs to the class-II aminoacyl-tRNA synthetase family. In terms of assembly, tetramer of two alpha and two beta subunits.

Its subcellular location is the cytoplasm. It catalyses the reaction tRNA(Gly) + glycine + ATP = glycyl-tRNA(Gly) + AMP + diphosphate. The protein is Glycine--tRNA ligase beta subunit of Desulforamulus reducens (strain ATCC BAA-1160 / DSM 100696 / MI-1) (Desulfotomaculum reducens).